The chain runs to 205 residues: Putative 3-methyladenine DNA glycosylase (205 aa).

The protein belongs to the DNA glycosylase MPG family.

This Clostridium perfringens (strain SM101 / Type A) protein is Putative 3-methyladenine DNA glycosylase.